The chain runs to 386 residues: PqqA peptide cyclase (386 aa).

Residues S9–K228 enclose the Radical SAM core domain. C23, C27, and C30 together coordinate [4Fe-4S] cluster.

The protein belongs to the radical SAM superfamily. PqqE family. In terms of assembly, interacts with PqqD. The interaction is necessary for activity of PqqE. [4Fe-4S] cluster serves as cofactor.

The enzyme catalyses [PQQ precursor protein] + S-adenosyl-L-methionine = E-Y cross-linked-[PQQ precursor protein] + 5'-deoxyadenosine + L-methionine + H(+). It participates in cofactor biosynthesis; pyrroloquinoline quinone biosynthesis. Its function is as follows. Catalyzes the cross-linking of a glutamate residue and a tyrosine residue in the PqqA protein as part of the biosynthesis of pyrroloquinoline quinone (PQQ). This is PqqA peptide cyclase from Acinetobacter baylyi (strain ATCC 33305 / BD413 / ADP1).